Here is a 202-residue protein sequence, read N- to C-terminus: LexA repressor 1 (202 aa).

Positions 28 to 48 (RAEIAQELGFKSPNAAEEHLK) form a DNA-binding region, H-T-H motif. Catalysis depends on for autocatalytic cleavage activity residues S123 and K160.

The protein belongs to the peptidase S24 family. In terms of assembly, homodimer.

The catalysed reaction is Hydrolysis of Ala-|-Gly bond in repressor LexA.. Its function is as follows. Represses a number of genes involved in the response to DNA damage (SOS response), including recA and lexA. In the presence of single-stranded DNA, RecA interacts with LexA causing an autocatalytic cleavage which disrupts the DNA-binding part of LexA, leading to derepression of the SOS regulon and eventually DNA repair. The polypeptide is LexA repressor 1 (Pseudomonas syringae pv. tomato (strain ATCC BAA-871 / DC3000)).